The primary structure comprises 384 residues: Cobalt-precorrin-5B C(1)-methyltransferase (384 aa).

Belongs to the CbiD family.

The enzyme catalyses Co-precorrin-5B + S-adenosyl-L-methionine = Co-precorrin-6A + S-adenosyl-L-homocysteine. Its pathway is cofactor biosynthesis; adenosylcobalamin biosynthesis; cob(II)yrinate a,c-diamide from sirohydrochlorin (anaerobic route): step 6/10. Its function is as follows. Catalyzes the methylation of C-1 in cobalt-precorrin-5B to form cobalt-precorrin-6A. In Marinomonas sp. (strain MWYL1), this protein is Cobalt-precorrin-5B C(1)-methyltransferase.